Here is a 460-residue protein sequence, read N- to C-terminus: CUGBP Elav-like family member 6 (460 aa).

The span at Met1–Pro10 shows a compositional bias: low complexity. Residues Met1–Ala37 form a disordered region. RRM domains follow at residues Ile46–Ser127 and Arg134–Thr214. Residues Asn316 to Asn336 form a disordered region. Residues Gly319–Asn336 are compositionally biased toward polar residues. Residues Cys375 to Pro453 enclose the RRM 3 domain.

This sequence belongs to the CELF/BRUNOL family.

Its subcellular location is the nucleus. It localises to the cytoplasm. Its function is as follows. RNA-binding protein implicated in the regulation of pre-mRNA alternative splicing. Mediates exon inclusion and/or exclusion in pre-mRNA that are subject to tissue-specific and developmentally regulated alternative splicing. Specifically activates exon 5 inclusion of TNNT2 in a muscle-specific splicing enhancer (MSE)-dependent manner. Promotes also exon exclusion of INSR pre-mRNA. The polypeptide is CUGBP Elav-like family member 6 (Celf6) (Mus musculus (Mouse)).